Reading from the N-terminus, the 187-residue chain is GTP cyclohydrolase 1 (187 aa).

Positions 76, 79, and 148 each coordinate Zn(2+).

The protein belongs to the GTP cyclohydrolase I family. As to quaternary structure, homomer.

The enzyme catalyses GTP + H2O = 7,8-dihydroneopterin 3'-triphosphate + formate + H(+). It functions in the pathway cofactor biosynthesis; 7,8-dihydroneopterin triphosphate biosynthesis; 7,8-dihydroneopterin triphosphate from GTP: step 1/1. The chain is GTP cyclohydrolase 1 from Streptococcus gordonii (strain Challis / ATCC 35105 / BCRC 15272 / CH1 / DL1 / V288).